The primary structure comprises 169 residues: Superoxide dismutase [Cu-Zn] 1 (169 aa).

The signal sequence occupies residues 1–18 (MFEQWDALCAVLFSFSIA). Cu cation is bound by residues His-65, His-67, and His-83. Cys-72 and Cys-165 form a disulfide bridge. Zn(2+)-binding residues include His-83, His-91, His-100, and Asp-103. Position 145 (His-145) interacts with Cu cation.

Belongs to the Cu-Zn superoxide dismutase family. Cu cation serves as cofactor. It depends on Zn(2+) as a cofactor.

It catalyses the reaction 2 superoxide + 2 H(+) = H2O2 + O2. In terms of biological role, destroys radicals which are normally produced within the cells and which are toxic to biological systems. This Aquifex aeolicus (strain VF5) protein is Superoxide dismutase [Cu-Zn] 1 (sodC1).